A 275-amino-acid polypeptide reads, in one-letter code: NH(3)-dependent NAD(+) synthetase (275 aa).

ATP is bound at residue 46-53 (GISGGQDS). Residue D52 participates in Mg(2+) binding. Residue R140 participates in deamido-NAD(+) binding. T160 contributes to the ATP binding site. E165 serves as a coordination point for Mg(2+). Deamido-NAD(+) is bound by residues K173 and D180. ATP contacts are provided by K189 and T211. 260–261 (HK) serves as a coordination point for deamido-NAD(+).

This sequence belongs to the NAD synthetase family. Homodimer.

The catalysed reaction is deamido-NAD(+) + NH4(+) + ATP = AMP + diphosphate + NAD(+) + H(+). It functions in the pathway cofactor biosynthesis; NAD(+) biosynthesis; NAD(+) from deamido-NAD(+) (ammonia route): step 1/1. Catalyzes the ATP-dependent amidation of deamido-NAD to form NAD. Uses ammonia as a nitrogen source. This chain is NH(3)-dependent NAD(+) synthetase, found in Cronobacter sakazakii (strain ATCC BAA-894) (Enterobacter sakazakii).